A 107-amino-acid chain; its full sequence is Conantokin-R (107 aa).

The signal sequence occupies residues 1-24 (MQLYTYLYLLVSLVTFYLILGTGT). Positions 25–80 (LGHGGALTERRSTDATALKPEPVLLQKSSARSTDDNGNDRLTQMKRILKKRGNKAR) are excised as a propeptide. The interval 26-64 (GHGGALTERRSTDATALKPEPVLLQKSSARSTDDNGNDR) is disordered. A 4-carboxyglutamate mark is found at Glu-83, Glu-84, Glu-91, and Glu-95. The a divalent metal cation site is built by Glu-91 and Glu-95. The cysteines at positions 101 and 105 are disulfide-linked.

It belongs to the conotoxin B superfamily. Requires Ca(2+) as cofactor. The cofactor is Mg(2+). In terms of tissue distribution, expressed by the venom duct.

The protein resides in the secreted. Its function is as follows. Conantokins inhibit N-methyl-D-aspartate (NMDA) receptors. This toxin is potent in the following order of preference: NR2B approximately NR2A/GRIN2A &gt; NR2C/GRIN2C &gt;&gt; NR2D/GRIN2D. Induces sleep-like symptoms in young mice. Is a highly potent anticonvulsant compound. This is Conantokin-R from Conus radiatus (Rayed cone).